A 467-amino-acid chain; its full sequence is Transcription factor TGAL7 (467 aa).

A compositionally biased stretch (basic and acidic residues) spans 1–10 (MGGSREEDRQ). 2 disordered regions span residues 1 to 42 (MGGS…KESS) and 105 to 184 (QLQV…KTLR). Low complexity predominate over residues 25–41 (SSSPTTMIASSSMSKES). A compositionally biased stretch (polar residues) spans 120 to 129 (QGGQKINSSV). Positions 145-157 (KDNKNSSLIKKEG) are enriched in basic and acidic residues. Residues 158-168 (SSSGKGATTSN) are compositionally biased toward polar residues. A compositionally biased stretch (basic and acidic residues) spans 169–182 (DPEREGRRTLDPKT). In terms of domain architecture, bZIP spans 179–223 (DPKTLRRLAQNREAARKSRLRKKAYIQQLESSRIRLSQLEQQVHV). The tract at residues 181–201 (KTLRRLAQNREAARKSRLRKK) is basic motif. Residues 207–221 (LESSRIRLSQLEQQV) form a leucine-zipper region. Residues 247–458 (ASLFDLEYGR…RALSTLWVAR (212 aa)) form the DOG1 domain.

This sequence belongs to the bZIP family. As to quaternary structure, interacts with NPR5/NH4, NH5.1 and NH5.2.

It is found in the nucleus. Its function is as follows. Transcriptional regulator involved in defense response. The sequence is that of Transcription factor TGAL7 from Oryza sativa subsp. japonica (Rice).